We begin with the raw amino-acid sequence, 191 residues long: Syndecan-2-A (191 aa).

The N-terminal stretch at 1–22 (MRNVWLIVPFALLAALSGETWA) is a signal peptide. The Extracellular portion of the chain corresponds to 23 to 137 (QADRDLYIDS…NLFHRTEVLA (115 aa)). Positions 32 to 60 (STESSGNYPVDDDDYSSGSGSGIPARGDD) are disordered. Ser-36, Ser-48, Ser-50, and Ser-52 each carry an O-linked (Xyl...) (glycosaminoglycan) serine glycan. Residues 138-158 (AVIAGGGIGFLFAVFLILLLV) traverse the membrane as a helical segment. The Cytoplasmic portion of the chain corresponds to 159–191 (YRMRKKDEGSYDLGERKPSSAVYQKAPTKEFYA). Residues 168-191 (SYDLGERKPSSAVYQKAPTKEFYA) are disordered.

This sequence belongs to the syndecan proteoglycan family. Post-translationally, O-glycosylated; contains both heparan sulfate and chondroitin sulfate.

It localises to the membrane. Its function is as follows. Cell surface proteoglycan. The chain is Syndecan-2-A (sdc2-a) from Xenopus laevis (African clawed frog).